The chain runs to 427 residues: Glutamate-1-semialdehyde 2,1-aminomutase (427 aa).

Lys265 is modified (N6-(pyridoxal phosphate)lysine).

This sequence belongs to the class-III pyridoxal-phosphate-dependent aminotransferase family. HemL subfamily. In terms of assembly, homodimer. Pyridoxal 5'-phosphate serves as cofactor.

It is found in the cytoplasm. It carries out the reaction (S)-4-amino-5-oxopentanoate = 5-aminolevulinate. The protein operates within porphyrin-containing compound metabolism; protoporphyrin-IX biosynthesis; 5-aminolevulinate from L-glutamyl-tRNA(Glu): step 2/2. This is Glutamate-1-semialdehyde 2,1-aminomutase from Burkholderia thailandensis (strain ATCC 700388 / DSM 13276 / CCUG 48851 / CIP 106301 / E264).